The primary structure comprises 455 residues: Chromosomal replication initiator protein DnaA (455 aa).

Residues Met-1–Arg-75 are domain I, interacts with DnaA modulators. Residues Arg-75 to Thr-117 form a domain II region. Basic and acidic residues predominate over residues Arg-84–Ser-93. The disordered stretch occupies residues Arg-84–Thr-107. The tract at residues Lys-118–Ser-334 is domain III, AAA+ region. ATP-binding residues include Gly-162, Gly-164, Lys-165, and Thr-166. Residues Arg-335–Ser-455 are domain IV, binds dsDNA.

It belongs to the DnaA family. As to quaternary structure, oligomerizes as a right-handed, spiral filament on DNA at oriC.

The protein localises to the cytoplasm. Its function is as follows. Plays an essential role in the initiation and regulation of chromosomal replication. ATP-DnaA binds to the origin of replication (oriC) to initiate formation of the DNA replication initiation complex once per cell cycle. Binds the DnaA box (a 9 base pair repeat at the origin) and separates the double-stranded (ds)DNA. Forms a right-handed helical filament on oriC DNA; dsDNA binds to the exterior of the filament while single-stranded (ss)DNA is stabiized in the filament's interior. The ATP-DnaA-oriC complex binds and stabilizes one strand of the AT-rich DNA unwinding element (DUE), permitting loading of DNA polymerase. After initiation quickly degrades to an ADP-DnaA complex that is not apt for DNA replication. Binds acidic phospholipids. This chain is Chromosomal replication initiator protein DnaA, found in Lactiplantibacillus plantarum (strain ATCC BAA-793 / NCIMB 8826 / WCFS1) (Lactobacillus plantarum).